A 360-amino-acid chain; its full sequence is Mitogen-activated protein kinase 14 (360 aa).

N-acetylserine is present on Ser2. A Phosphoserine modification is found at Ser2. Thr16 is subject to Phosphothreonine. The region spanning 24-308 (YQNLSPVGSG…AAQALAHAYF (285 aa)) is the Protein kinase domain. Residues 30-38 (VGSGAYGSV) and Lys53 contribute to the ATP site. Residues Lys53 and Lys152 each carry the N6-acetyllysine modification. Asp168 functions as the Proton acceptor in the catalytic mechanism. Position 180 is a phosphothreonine; by MAP2K3, MAP2K4, MAP2K6 and autocatalysis (Thr180). The TXY motif lies at 180–182 (TGY). A Phosphotyrosine; by MAP2K3, MAP2K4, MAP2K6 and autocatalysis modification is found at Tyr182. Thr263 bears the Phosphothreonine mark. Tyr323 is modified (phosphotyrosine; by ZAP70).

It belongs to the protein kinase superfamily. CMGC Ser/Thr protein kinase family. MAP kinase subfamily. As to quaternary structure, component of a signaling complex containing at least AKAP13, PKN1, MAPK14, ZAK and MAP2K3. Within this complex, AKAP13 interacts directly with PKN1, which in turn recruits MAPK14, MAP2K3 and ZAK. Binds to a kinase interaction motif within the protein tyrosine phosphatase, PTPRR. This interaction retains MAPK14 in the cytoplasm and prevents nuclear accumulation. Interacts with SPAG9 and GADD45A. Interacts with CDC25B, CDC25C, DUSP1, DUSP10, DUSP16, NP60, SUPT20H and TAB1. Interacts with casein kinase II subunits CSNK2A1 and CSNK2B. Interacts with PPM1D. Interacts with CDK5RAP3; recruits PPM1D to MAPK14 and may regulate its dephosphorylation. Interacts with DUSP2; this interaction does not lead to catalytic activation of DUSP2 and dephosphrylation of MAPK14. It depends on Mg(2+) as a cofactor. Dually phosphorylated on Thr-180 and Tyr-182 by the MAP2Ks MAP2K3/MKK3, MAP2K4/MKK4 and MAP2K6/MKK6 in response to inflammatory citokines, environmental stress or growth factors, which activates the enzyme. Dual phosphorylation can also be mediated by TAB1-mediated autophosphorylation. TCR engagement in T-cells also leads to Tyr-323 phosphorylation by ZAP70. Dephosphorylated and inactivated by DUPS1, DUSP10 and DUSP16. PPM1D also mediates dephosphorylation and inactivation of MAPK14. Post-translationally, acetylated at Lys-53 and Lys-152 by KAT2B and EP300. Acetylation at Lys-53 increases the affinity for ATP and enhances kinase activity. Lys-53 and Lys-152 are deacetylated by HDAC3. In terms of processing, ubiquitinated. Ubiquitination leads to degradation by the proteasome pathway. Brain, heart, placenta, pancreas and skeletal muscle. Expressed to a lesser extent in lung, liver and kidney.

The protein resides in the cytoplasm. It localises to the nucleus. The catalysed reaction is L-seryl-[protein] + ATP = O-phospho-L-seryl-[protein] + ADP + H(+). It catalyses the reaction L-threonyl-[protein] + ATP = O-phospho-L-threonyl-[protein] + ADP + H(+). Its activity is regulated as follows. Activated by cell stresses such as DNA damage, heat shock, osmotic shock, anisomycin and sodium arsenite, as well as pro-inflammatory stimuli such as bacterial lipopolysaccharide (LPS) and interleukin-1. Activation occurs through dual phosphorylation of Thr-180 and Tyr-182 by either of two dual specificity kinases, MAP2K3/MKK3 or MAP2K6/MKK6, and potentially also MAP2K4/MKK4, as well as by TAB1-mediated autophosphorylation. MAPK14 phosphorylated on both Thr-180 and Tyr-182 is 10-20-fold more active than MAPK14 phosphorylated only on Thr-180, whereas MAPK14 phosphorylated on Tyr-182 alone is inactive. whereas Thr-180 is necessary for catalysis, Tyr-182 may be required for auto-activation and substrate recognition. Phosphorylated at Tyr-323 by ZAP70 in an alternative activation pathway in response to TCR signaling in T-cells. This alternative pathway is inhibited by GADD45A. Inhibited by dual specificity phosphatases, such as DUSP1, DUSP10, and DUSP16. Specifically inhibited by the binding of pyridinyl-imidazole compounds, which are cytokine-suppressive anti-inflammatory drugs (CSAID). Isoform Mxi2 is 100-fold less sensitive to these agents than the other isoforms and is not inhibited by DUSP1. Isoform Exip is not activated by MAP2K6. SB203580 is an inhibitor of MAPK14. In terms of biological role, serine/threonine kinase which acts as an essential component of the MAP kinase signal transduction pathway. MAPK14 is one of the four p38 MAPKs which play an important role in the cascades of cellular responses evoked by extracellular stimuli such as pro-inflammatory cytokines or physical stress leading to direct activation of transcription factors. Accordingly, p38 MAPKs phosphorylate a broad range of proteins and it has been estimated that they may have approximately 200 to 300 substrates each. Some of the targets are downstream kinases which are activated through phosphorylation and further phosphorylate additional targets. RPS6KA5/MSK1 and RPS6KA4/MSK2 can directly phosphorylate and activate transcription factors such as CREB1, ATF1, the NF-kappa-B isoform RELA/NFKB3, STAT1 and STAT3, but can also phosphorylate histone H3 and the nucleosomal protein HMGN1. RPS6KA5/MSK1 and RPS6KA4/MSK2 play important roles in the rapid induction of immediate-early genes in response to stress or mitogenic stimuli, either by inducing chromatin remodeling or by recruiting the transcription machinery. On the other hand, two other kinase targets, MAPKAPK2/MK2 and MAPKAPK3/MK3, participate in the control of gene expression mostly at the post-transcriptional level, by phosphorylating ZFP36 (tristetraprolin) and ELAVL1, and by regulating EEF2K, which is important for the elongation of mRNA during translation. MKNK1/MNK1 and MKNK2/MNK2, two other kinases activated by p38 MAPKs, regulate protein synthesis by phosphorylating the initiation factor EIF4E2. MAPK14 also interacts with casein kinase II, leading to its activation through autophosphorylation and further phosphorylation of TP53/p53. In the cytoplasm, the p38 MAPK pathway is an important regulator of protein turnover. For example, CFLAR is an inhibitor of TNF-induced apoptosis whose proteasome-mediated degradation is regulated by p38 MAPK phosphorylation. In a similar way, MAPK14 phosphorylates the ubiquitin ligase SIAH2, regulating its activity towards EGLN3. MAPK14 may also inhibit the lysosomal degradation pathway of autophagy by interfering with the intracellular trafficking of the transmembrane protein ATG9. Another function of MAPK14 is to regulate the endocytosis of membrane receptors by different mechanisms that impinge on the small GTPase RAB5A. In addition, clathrin-mediated EGFR internalization induced by inflammatory cytokines and UV irradiation depends on MAPK14-mediated phosphorylation of EGFR itself as well as of RAB5A effectors. Ectodomain shedding of transmembrane proteins is regulated by p38 MAPKs as well. In response to inflammatory stimuli, p38 MAPKs phosphorylate the membrane-associated metalloprotease ADAM17. Such phosphorylation is required for ADAM17-mediated ectodomain shedding of TGF-alpha family ligands, which results in the activation of EGFR signaling and cell proliferation. Another p38 MAPK substrate is FGFR1. FGFR1 can be translocated from the extracellular space into the cytosol and nucleus of target cells, and regulates processes such as rRNA synthesis and cell growth. FGFR1 translocation requires p38 MAPK activation. In the nucleus, many transcription factors are phosphorylated and activated by p38 MAPKs in response to different stimuli. Classical examples include ATF1, ATF2, ATF6, ELK1, PTPRH, DDIT3, TP53/p53 and MEF2C and MEF2A. The p38 MAPKs are emerging as important modulators of gene expression by regulating chromatin modifiers and remodelers. The promoters of several genes involved in the inflammatory response, such as IL6, IL8 and IL12B, display a p38 MAPK-dependent enrichment of histone H3 phosphorylation on 'Ser-10' (H3S10ph) in LPS-stimulated myeloid cells. This phosphorylation enhances the accessibility of the cryptic NF-kappa-B-binding sites marking promoters for increased NF-kappa-B recruitment. Phosphorylates CDC25B and CDC25C which is required for binding to 14-3-3 proteins and leads to initiation of a G2 delay after ultraviolet radiation. Phosphorylates TIAR following DNA damage, releasing TIAR from GADD45A mRNA and preventing mRNA degradation. The p38 MAPKs may also have kinase-independent roles, which are thought to be due to the binding to targets in the absence of phosphorylation. Protein O-Glc-N-acylation catalyzed by the OGT is regulated by MAPK14, and, although OGT does not seem to be phosphorylated by MAPK14, their interaction increases upon MAPK14 activation induced by glucose deprivation. This interaction may regulate OGT activity by recruiting it to specific targets such as neurofilament H, stimulating its O-Glc-N-acylation. Required in mid-fetal development for the growth of embryo-derived blood vessels in the labyrinth layer of the placenta. Also plays an essential role in developmental and stress-induced erythropoiesis, through regulation of EPO gene expression. Isoform MXI2 activation is stimulated by mitogens and oxidative stress and only poorly phosphorylates ELK1 and ATF2. Isoform EXIP may play a role in the early onset of apoptosis. Phosphorylates S100A9 at 'Thr-113'. Phosphorylates NLRP1 downstream of MAP3K20/ZAK in response to UV-B irradiation and ribosome collisions, promoting activation of the NLRP1 inflammasome and pyroptosis. Functionally, (Microbial infection) Activated by phosphorylation by M.tuberculosis EsxA in T-cells leading to inhibition of IFN-gamma production; phosphorylation is apparent within 15 minutes and is inhibited by kinase-specific inhibitors SB203580 and siRNA. The sequence is that of Mitogen-activated protein kinase 14 from Homo sapiens (Human).